The chain runs to 323 residues: Thymidylate synthase (323 aa).

Residues arginine 21 and 172–173 (RR) each bind dUMP. Cysteine 192 acts as the Nucleophile in catalysis. DUMP-binding positions include 214-217 (RSND), asparagine 225, and 255-257 (HVY). A (6R)-5,10-methylene-5,6,7,8-tetrahydrofolate-binding site is contributed by aspartate 217. Residue alanine 322 participates in (6R)-5,10-methylene-5,6,7,8-tetrahydrofolate binding.

Belongs to the thymidylate synthase family. Bacterial-type ThyA subfamily. Homodimer.

It localises to the cytoplasm. The catalysed reaction is dUMP + (6R)-5,10-methylene-5,6,7,8-tetrahydrofolate = 7,8-dihydrofolate + dTMP. Its pathway is pyrimidine metabolism; dTTP biosynthesis. Functionally, catalyzes the reductive methylation of 2'-deoxyuridine-5'-monophosphate (dUMP) to 2'-deoxythymidine-5'-monophosphate (dTMP) while utilizing 5,10-methylenetetrahydrofolate (mTHF) as the methyl donor and reductant in the reaction, yielding dihydrofolate (DHF) as a by-product. This enzymatic reaction provides an intracellular de novo source of dTMP, an essential precursor for DNA biosynthesis. The protein is Thymidylate synthase of Pseudomonas syringae pv. tomato (strain ATCC BAA-871 / DC3000).